A 180-amino-acid chain; its full sequence is Magnetosome protein MamS (180 aa).

Over 1-21 (MDFRPDQVVARIRGAVEGALT) the chain is Cytoplasmic. Residues 22 to 42 (AQSVLGIGGALVLILVVIALL) traverse the membrane as a helical segment. The Lumenal portion of the chain corresponds to 43-180 (PDRFTRGEGK…EGLALWMTVQ (138 aa)).

This sequence belongs to the magnetosome MamS family.

It localises to the magnetosome membrane. May play a role in magnetite crystal growth and size. This is Magnetosome protein MamS from Magnetospirillum gryphiswaldense (strain DSM 6361 / JCM 21280 / NBRC 15271 / MSR-1).